Here is a 186-residue protein sequence, read N- to C-terminus: Shikimate kinase (186 aa).

Position 21 to 26 (Gly-21 to Thr-26) interacts with ATP. A Mg(2+)-binding site is contributed by Thr-25. Asp-43, Arg-67, and Gly-90 together coordinate substrate. Residue Arg-129 coordinates ATP. Residue Arg-147 coordinates substrate.

The protein belongs to the shikimate kinase family. Monomer. The cofactor is Mg(2+).

Its subcellular location is the cytoplasm. The enzyme catalyses shikimate + ATP = 3-phosphoshikimate + ADP + H(+). Its pathway is metabolic intermediate biosynthesis; chorismate biosynthesis; chorismate from D-erythrose 4-phosphate and phosphoenolpyruvate: step 5/7. Functionally, catalyzes the specific phosphorylation of the 3-hydroxyl group of shikimic acid using ATP as a cosubstrate. In Bacillus subtilis (strain 168), this protein is Shikimate kinase.